Here is an 833-residue protein sequence, read N- to C-terminus: Leucine--tRNA ligase (833 aa).

The 'HIGH' region motif lies at 41–52; it reads PYPSGAGLHVGH. The 'KMSKS' region signature appears at 610-614; the sequence is KMSKS. Lys613 contacts ATP.

It belongs to the class-I aminoacyl-tRNA synthetase family.

Its subcellular location is the cytoplasm. It catalyses the reaction tRNA(Leu) + L-leucine + ATP = L-leucyl-tRNA(Leu) + AMP + diphosphate. This Streptococcus pneumoniae serotype 19F (strain G54) protein is Leucine--tRNA ligase.